Consider the following 335-residue polypeptide: NADH-quinone oxidoreductase subunit H (335 aa).

8 helical membrane-spanning segments follow: residues 15 to 35 (VVKAIVVLLAVVVCGALLSFV), 81 to 101 (MIFTLAPVVAMSALLIGFSII), 114 to 134 (IGLLFFFAMAGLSVYAVLFAG), 154 to 174 (VSYEVFLGLALMGVVVQVGSF), 187 to 207 (LWFIIPQFFGFCTFFIAGVAV), 238 to 258 (FFVGEYIGIILISALLVTLFF), 270 to 290 (QVPFLWFALKTAFFIMLFILL), and 307 to 327 (WKFCLPLTLINLLVTAAIVLY).

It belongs to the complex I subunit 1 family. As to quaternary structure, NDH-1 is composed of 13 different subunits. Subunits NuoA, H, J, K, L, M, N constitute the membrane sector of the complex.

It is found in the cell inner membrane. It carries out the reaction a quinone + NADH + 5 H(+)(in) = a quinol + NAD(+) + 4 H(+)(out). NDH-1 shuttles electrons from NADH, via FMN and iron-sulfur (Fe-S) centers, to quinones in the respiratory chain. The immediate electron acceptor for the enzyme in this species is believed to be ubiquinone. Couples the redox reaction to proton translocation (for every two electrons transferred, four hydrogen ions are translocated across the cytoplasmic membrane), and thus conserves the redox energy in a proton gradient. This subunit may bind ubiquinone. The sequence is that of NADH-quinone oxidoreductase subunit H from Pseudomonas putida (strain GB-1).